The sequence spans 366 residues: Chorismate synthase (366 aa).

2 residues coordinate NADP(+): Arg-48 and Arg-54. FMN is bound by residues 125–127 (RSS), 238–239 (NA), Gly-278, 293–297 (KPTSS), and Arg-319.

The protein belongs to the chorismate synthase family. Homotetramer. FMNH2 serves as cofactor.

It catalyses the reaction 5-O-(1-carboxyvinyl)-3-phosphoshikimate = chorismate + phosphate. Its pathway is metabolic intermediate biosynthesis; chorismate biosynthesis; chorismate from D-erythrose 4-phosphate and phosphoenolpyruvate: step 7/7. In terms of biological role, catalyzes the anti-1,4-elimination of the C-3 phosphate and the C-6 proR hydrogen from 5-enolpyruvylshikimate-3-phosphate (EPSP) to yield chorismate, which is the branch point compound that serves as the starting substrate for the three terminal pathways of aromatic amino acid biosynthesis. This reaction introduces a second double bond into the aromatic ring system. The polypeptide is Chorismate synthase (Dechloromonas aromatica (strain RCB)).